We begin with the raw amino-acid sequence, 1300 residues long: Nephrocystin-3 (1300 aa).

A coiled-coil region spans residues 82–183 (KNNEVASMQK…LQRLQAQGIQ (102 aa)). TPR repeat units follow at residues 443-476 (TMED…ICEL), 916-949 (ADLY…RETA), 958-991 (AQSL…SENA), 1000-1033 (AREL…RQKS), 1066-1099 (ARTL…RERV), 1108-1141 (AQSI…RRRA), 1150-1183 (AYTV…RQKS), 1192-1225 (ATAL…YEDS), and 1234-1267 (GETL…KETE). A disordered region spans residues 1268 to 1288 (TSVLGAKAPSGHSSSGGDTYS). The segment covering 1278–1288 (GHSSSGGDTYS) has biased composition (polar residues).

Its subcellular location is the cell projection. It localises to the cilium. Functionally, required for normal ciliary development and function. Inhibits disheveled-1-induced canonical Wnt-signaling activity and may also play a role in the control of non-canonical Wnt signaling that regulates planar cell polarity. Probably acts as a molecular switch between different Wnt signaling pathways. Required for proper convergent extension cell movements. This chain is Nephrocystin-3 (nphp3), found in Xenopus laevis (African clawed frog).